Here is a 417-residue protein sequence, read N- to C-terminus: Putative UDP-arabinose 4-epimerase 2 (417 aa).

At 1–31 (MLNLGRARTGRQNRSMSFEGLDFADPKKNNN) the chain is on the cytoplasmic side. The chain crosses the membrane as a helical; Signal-anchor for type II membrane protein span at residues 32-54 (YMGKIVLVMTLTAMCILLLNQSP). Over 55–417 (TFNTPSVFSR…YGSSSLVSAY (363 aa)) the chain is Lumenal. 71 to 102 (HVLVTGGAGYIGSHAALRLLKDSYRVTIVDNL) is an NAD(+) binding site. Y219 (proton acceptor) is an active-site residue.

Belongs to the NAD(P)-dependent epimerase/dehydratase family. Requires NAD(+) as cofactor.

It is found in the golgi apparatus. Its subcellular location is the golgi stack membrane. It carries out the reaction UDP-beta-L-arabinopyranose = UDP-alpha-D-xylose. It participates in nucleotide-sugar biosynthesis; UDP-L-arabinose biosynthesis; UDP-L-arabinose from UDP-alpha-D-xylose: step 1/1. It functions in the pathway cell wall biogenesis; cell wall polysaccharide biosynthesis. This chain is Putative UDP-arabinose 4-epimerase 2, found in Arabidopsis thaliana (Mouse-ear cress).